The following is a 245-amino-acid chain: 8-amino-3,8-dideoxy-manno-octulosonate cytidylyltransferase (245 aa).

It belongs to the KdsB family.

The protein resides in the cytoplasm. The catalysed reaction is 8-amino-3,8-dideoxy-alpha-D-manno-octulosonate + CTP = CMP-8-amino-3,8-dideoxy-alpha-D-manno-oct-2-ulosonate + diphosphate. It participates in bacterial outer membrane biogenesis; lipopolysaccharide biosynthesis. Its function is as follows. Activates KDO8N (a required 8-carbon sugar) for incorporation into bacterial lipopolysaccharide in the Shewanella genus. In Shewanella pealeana (strain ATCC 700345 / ANG-SQ1), this protein is 8-amino-3,8-dideoxy-manno-octulosonate cytidylyltransferase.